The following is a 2234-amino-acid chain: RNA-directed RNA polymerase L (2234 aa).

The tract at residues 26 to 283 (ITVVTSQTEM…INLSDEKLSC (258 aa)) is endonuclease. Residues E51, D89, and E102 each coordinate Mn(2+). K115 is a catalytic residue. Over residues 879–891 (KRDDHMKDSEDSK) the composition is skewed to basic and acidic residues. 2 disordered regions span residues 879–898 (KRDDHMKDSEDSKQNLSSDL) and 927–949 (KLKEKTEARQSSSGSSLKNQQKR). Residues 935-945 (RQSSSGSSLKN) are compositionally biased toward polar residues. The RdRp catalytic domain occupies 1184–1383 (MEMKMSVNLG…FISSKFNKFV (200 aa)). A Mg(2+)-binding site is contributed by D1342.

This sequence belongs to the Bunyavirales RNA polymerase family. As to quaternary structure, homomultimer; the oligomeric structure is essential for the polymerase activity. Interacts with nucleoprotein N. Interacts with protein Z; this interaction inhibits viral transcription and replication, Z partially blocks the product exit tunnel for the releasing nascent RNA product. It depends on Mn(2+) as a cofactor. Mg(2+) serves as cofactor.

It is found in the virion. The protein resides in the host cytoplasm. It carries out the reaction RNA(n) + a ribonucleoside 5'-triphosphate = RNA(n+1) + diphosphate. Functionally, RNA-dependent RNA polymerase, which is responsible for the replication and transcription of the viral RNA genome using antigenomic RNA as an intermediate. During transcription, synthesizes subgenomic RNAs and assures their capping by a cap-snatching mechanism, which involves the endonuclease activity cleaving the host capped pre-mRNAs. These short capped RNAs are then used as primers for viral transcription. The 3'-end of subgenomic mRNAs molecules are heterogeneous and not polyadenylated. The replicase function is to direct synthesis of antigenomic and genomic RNA which are encapsidated and non capped. As a consequence of the use of the same enzyme for both transcription and replication, these mechanisms need to be well coordinated. These processes may be regulated by proteins N and Z in a dose-dependent manner. Z protein inhibits the viral polymerase L und thus the viral transcription and RNA synthesis. In Bolomys (OLVV), this protein is RNA-directed RNA polymerase L.